The sequence spans 360 residues: Endolytic murein transglycosylase (360 aa).

A helical membrane pass occupies residues 16-36 (IILSSIVVLFLIIGGAFLYGK).

Belongs to the transglycosylase MltG family.

The protein localises to the cell membrane. It catalyses the reaction a peptidoglycan chain = a peptidoglycan chain with N-acetyl-1,6-anhydromuramyl-[peptide] at the reducing end + a peptidoglycan chain with N-acetylglucosamine at the non-reducing end.. Functions as a peptidoglycan terminase that cleaves nascent peptidoglycan strands endolytically to terminate their elongation. This Bacillus subtilis (strain 168) protein is Endolytic murein transglycosylase.